Consider the following 166-residue polypeptide: Bud site selection protein 20 (166 aa).

A Nuclear localization signal motif is present at residues 7–16 (KRYKTKRRTR). A nuclear export signal-like (NES-like) region spans residues 17-31 (DLDLIYNDLSTKESV). A C2H2-type zinc finger spans residues 49-73 (HYCIHCAKYMETAIALKTHLKGKVH).

It belongs to the ZNF593/BUD20 C2H2-type zinc-finger protein family. As to quaternary structure, associates with pre-60S ribosomal particles; released from the pre-60S particle very early in the cytoplasm.

The protein resides in the nucleus. It localises to the cytoplasm. Functionally, involved in pre-60S ribosomal particles maturation by promoting the nuclear export of the 60S ribosome. Involved in positioning the proximal bud pole signal. The sequence is that of Bud site selection protein 20 from Saccharomyces cerevisiae (strain ATCC 204508 / S288c) (Baker's yeast).